Here is a 1768-residue protein sequence, read N- to C-terminus: MGQELSQHELYVEQLKKALKTRGVKVKGNDLLKFFDFVKDTCPWFPQEGTIDIKRWRRVGDCFQDYYNTFGPEKIPVTAFSYWNLIKDLIDKKEADPQVMAAVTQTEKILKVSSQTDLRDNSHNKDMDLISLESDDEEAKAPSEKMTMSNKSPKKYPAMLASQNNNTDKDPDLSEVDWDGLEDEAAKYHNPDWPPFLSRPPPYNRTAATAPAVMAVVNPKEELKEKISQLEEQIKLEELHQSLIIRLQKLKTGNERVTSSGNIESHSRTPKWPGQCLPKGKYLINKNTEEYPPKDIFPVTETMDGQGQAWRHHNGFDFTVIKELKTAVSQYGATAPYTLAIVESIADNWLTPTDWNTLVRAVLSGGDHLIWKSEFFENCRDTAKRNQQAGNGWDFDMLTGSGNYANTDAQMQYDPGLFAQIQAAATNAWRKLPVKGDPGASLTGVKQGPDEPFADFVHRLITTAGRIFGNAEAGVDYVKQLAYENANPACQAAIRPYRKKTDLTGYIRLCSDIGPSYQQGLAMAAAFSGQTVKDLLNNKNKDRGGCFKCGKKGHFAKDCRDHSNKNPESKVPGLCPRCKRGKHWANECKSKTDSQGNPLPPHQGNRDEGPAPGPEASLWGSQLCSSQQQQSISKLNRASPGSAGLDLCSTTHTVLTPEMGPQTLATGVYGPLPPNTFGLILGRGSTTVKGLQIYPGVIDNDYTGEFKIMARAISSIITIPQGERIAQLVLLPLLRTAHKIQHPYRGDKNFGSSDIFWVQPITHQKPSLVLWLDGKAFTGLIDTGADVTIIKQEDWPSHWPTTETLTNLRGIGQSNNPRQSSKYLTWKDKENNSGLIKPFVIPNLPVNLWGRDLLSQMKIMMCSPNDIVTAQMLAQGYSPGKGLGKREDGILQPIPNSGQLDRKGFGNFLATAVDILAPQRYADPITWKSDEPVWVDQWPLTQEKLAAAQQLVQEQLQAGHIIESNSPWNTPIFVIKKKSGKWRLLQDLRAVNATMVLMGALQPGLPSPVAIPQGYFKIVIDLKDCFFTIPLQPVDQKRFAFSLPSTNFKQPMKRYQWKVLPQGMANSPTLCQKYVAAAIEPVRKSWAQMYIIHYMDDILIAGKLGEQVLQCFAQLKQALTTTGLQIAPEKVQLQDPYTYLGFQINGPKITNQKAVIRRDKLQTLNDFQKLLGDINWLRPYLHLTTGDLKPLFDILKGDSNPNSPRSLSEAALASLQKVETAIAEQFVTQIDYTQPLTFLIFNTTLTPTGLFWQNNPVMWVHLPASPKKVLLPYYDAIADLIILGRDNSKKYFGLEPSTIIQPYSKSQIHWLMQNTETWPIACASYAGNIDNHYPPNKLIQFCKLHAVVFPRIISKTPLDNALLVFTDGSSTGIAAYTFEKTTVRFKTSHTSAQLVELQALIAVLSAFPHRALNVYTDSAYLAHSIPLLETVSHIKHISDTAKFFLQCQQLIYNRSIPFYLGHIRAHSGLPGPLSQGNHITDLATKVVATTLTTNLTEAQTAHALHHLNAQSLRLMFKITREQARQIVKQCPTCVTYLPIPHFGVNPKGLVPNMLWQMDVTHYSEFGKLKYVHVSIDTFSGFLVATLQTGEATKHVIAHLLHCFSIIGQPIHIKTDNGPGYTSSNFRAFCSKLHIKHTFGIPYNPQGQGIVERAHLSLKNTLEKIKKGEWYPTQGSPRNILNHALFILNFLNLDAQNKSAADRFWHTSSKKEYAMVKWKDPLDNTWHGPDPVLIWGRGSVCVYSQTHDAARWLPERLVRQVSNVTQSRE.

A lipid anchor (N-myristoyl glycine; by host) is attached at G2. The propeptide occupies 101–159; that stretch reads AAVTQTEKILKVSSQTDLRDNSHNKDMDLISLESDDEEAKAPSEKMTMSNKSPKKYPAM. The interval 132-152 is disordered; that stretch reads LESDDEEAKAPSEKMTMSNKS. The short motif at 200 to 203 is the PPXY motif element; it reads PPPY. The stretch at 215-251 forms a coiled coil; it reads AVVNPKEELKEKISQLEEQIKLEELHQSLIIRLQKLK. A CCHC-type zinc finger spans residues 544–561; sequence GGCFKCGKKGHFAKDCRD. Residues 589 to 622 are disordered; that stretch reads KSKTDSQGNPLPPHQGNRDEGPAPGPEASLWGSQ. The 77-residue stretch at 777-853 folds into the Peptidase A2 domain; the sequence is FTGLIDTGAD…LPVNLWGRDL (77 aa). D782 serves as the catalytic Protease; shared with dimeric partner. The region spanning 864 to 910 is the G-patch domain; sequence PNDIVTAQMLAQGYSPGKGLGKREDGILQPIPNSGQLDRKGFGNFLA. Residues 956–1144 enclose the Reverse transcriptase domain; that stretch reads LQAGHIIESN…DPYTYLGFQI (189 aa). The Mg(2+) site is built by D1021, D1096, D1097, D1367, E1396, D1417, and D1481. One can recognise an RNase H type-1 domain in the interval 1358–1489; that stretch reads LDNALLVFTD…TDLATKVVAT (132 aa). Residues 1493–1534 form an Integrase-type zinc finger; it reads TNLTEAQTAHALHHLNAQSLRLMFKITREQARQIVKQCPTCV. Residues H1502, H1506, C1530, and C1533 each contribute to the Zn(2+) site. An Integrase catalytic domain is found at 1547 to 1708; sequence KGLVPNMLWQ…AADRFWHTSS (162 aa). Mg(2+) contacts are provided by D1558, D1615, and E1651. Residues 1713–1762 constitute a DNA-binding region (integrase-type); sequence AMVKWKDPLDNTWHGPDPVLIWGRGSVCVYSQTHDAARWLPERLVRQVSN.

Belongs to the retroviral Pol polyprotein family. As to quaternary structure, homodimer. In terms of assembly, interacts with the G-patch peptide. Interacts with the reverse transcriptase/ribonuclease H. As to quaternary structure, homotrimer. Mg(2+) is required as a cofactor. Released by autocatalytic processing. The protease can undergo further autoprocessing to yield 2 shorter but enzymatically active forms of 12 kDa and 13 kDa. In terms of processing, myristoylated. Myristoylation of the matrix (MA) domain mediates the transport and binding of Gag polyproteins to the host plasma membrane and is required for the assembly of viral particles. Post-translationally, specific enzymatic cleavages in vivo yield mature proteins.

The protein localises to the virion. The enzyme catalyses DNA(n) + a 2'-deoxyribonucleoside 5'-triphosphate = DNA(n+1) + diphosphate. It carries out the reaction Endonucleolytic cleavage to 5'-phosphomonoester.. The catalysed reaction is dUTP + H2O = dUMP + diphosphate + H(+). Its function is as follows. Matrix protein. Functionally, nucleocapsid protein p14: Nucleocapsid protein. In terms of biological role, capsid protein. The aspartyl protease mediates proteolytic cleavages of Gag and Gag-Pol polyproteins during or shortly after the release of the virion from the plasma membrane. Cleavages take place as an ordered, step-wise cascade to yield mature proteins. This process is called maturation. Displays maximal activity during the budding process just prior to particle release from the cell. Its function is as follows. Enhances the activity of the reverse transcriptase. May be part of the mature RT. Functionally, RT is a multifunctional enzyme that converts the viral dimeric RNA genome into dsDNA in the cytoplasm, shortly after virus entry into the cell. This enzyme displays a DNA polymerase activity that can copy either DNA or RNA templates, and a ribonuclease H (RNase H) activity that cleaves the RNA strand of RNA-DNA heteroduplexes in a partially processive 3' to 5' endonucleasic mode. Conversion of viral genomic RNA into dsDNA requires many steps. A tRNA binds to the primer-binding site (PBS) situated at the 5' end of the viral RNA. RT uses the 3' end of the tRNA primer to perfom a short round of RNA-dependent minus-strand DNA synthesis. The reading proceeds through the U5 region and ends after the repeated (R) region which is present at both ends of viral RNA. The portion of the RNA-DNA heteroduplex is digested by the RNase H, resulting in a ssDNA product attached to the tRNA primer. This ssDNA/tRNA hybridizes with the identical R region situated at the 3' end of viral RNA. This template exchange, known as minus-strand DNA strong stop transfer, can be either intra- or intermolecular. RT uses the 3' end of this newly synthesized short ssDNA to perfom the RNA-dependent minus-strand DNA synthesis of the whole template. RNase H digests the RNA template except for a polypurine tract (PPT) situated at the 5' end of the genome. It is not clear if both polymerase and RNase H activities are simultaneous. RNase H probably can proceed both in a polymerase-dependent (RNA cut into small fragments by the same RT performing DNA synthesis) and a polymerase-independent mode (cleavage of remaining RNA fragments by free RTs). Secondly, RT performs DNA-directed plus-strand DNA synthesis using the PPT that has not been removed by RNase H as primers. PPT and tRNA primers are then removed by RNase H. The 3' and 5' ssDNA PBS regions hybridize to form a circular dsDNA intermediate. Strand displacement synthesis by RT to the PBS and PPT ends produces a blunt ended, linear dsDNA copy of the viral genome that includes long terminal repeats (LTRs) at both ends. In terms of biological role, catalyzes viral DNA integration into the host chromosome, by performing a series of DNA cutting and joining reactions. The polypeptide is Gag-Pro-Pol polyprotein (pol) (Macaca mulatta (Rhesus macaque)).